Consider the following 122-residue polypeptide: Small ribosomal subunit protein uS13c (122 aa).

A disordered region spans residues 102 to 122 (RTRTNARTRRGAKKTVAGKKK).

The protein belongs to the universal ribosomal protein uS13 family. Part of the 30S ribosomal subunit.

It localises to the plastid. The protein resides in the chloroplast. Located at the top of the head of the 30S subunit, it contacts several helices of the 16S rRNA. In Guillardia theta (Cryptophyte), this protein is Small ribosomal subunit protein uS13c.